The sequence spans 291 residues: Pantothenate synthetase (291 aa).

Met30 to His37 is an ATP binding site. His37 functions as the Proton donor in the catalytic mechanism. A (R)-pantoate-binding site is contributed by Gln61. Gln61 contacts beta-alanine. Residue Gly147–Asp150 participates in ATP binding. Gln153 serves as a coordination point for (R)-pantoate. Residues Val176 and Leu184–Arg187 contribute to the ATP site.

This sequence belongs to the pantothenate synthetase family. In terms of assembly, homodimer.

It localises to the cytoplasm. The catalysed reaction is (R)-pantoate + beta-alanine + ATP = (R)-pantothenate + AMP + diphosphate + H(+). Its pathway is cofactor biosynthesis; (R)-pantothenate biosynthesis; (R)-pantothenate from (R)-pantoate and beta-alanine: step 1/1. In terms of biological role, catalyzes the condensation of pantoate with beta-alanine in an ATP-dependent reaction via a pantoyl-adenylate intermediate. This is Pantothenate synthetase from Rhizobium rhizogenes (strain K84 / ATCC BAA-868) (Agrobacterium radiobacter).